Consider the following 249-residue polypeptide: Ubiquinone biosynthesis O-methyltransferase (249 aa).

S-adenosyl-L-methionine contacts are provided by Arg41, Gly72, Asp93, and Met136.

It belongs to the methyltransferase superfamily. UbiG/COQ3 family.

The catalysed reaction is a 3-demethylubiquinol + S-adenosyl-L-methionine = a ubiquinol + S-adenosyl-L-homocysteine + H(+). It carries out the reaction a 3-(all-trans-polyprenyl)benzene-1,2-diol + S-adenosyl-L-methionine = a 2-methoxy-6-(all-trans-polyprenyl)phenol + S-adenosyl-L-homocysteine + H(+). The protein operates within cofactor biosynthesis; ubiquinone biosynthesis. In terms of biological role, O-methyltransferase that catalyzes the 2 O-methylation steps in the ubiquinone biosynthetic pathway. This Mesorhizobium japonicum (strain LMG 29417 / CECT 9101 / MAFF 303099) (Mesorhizobium loti (strain MAFF 303099)) protein is Ubiquinone biosynthesis O-methyltransferase.